A 356-amino-acid polypeptide reads, in one-letter code: Myricetin 7/4'-O-methyltransferase 2 (356 aa).

Residue Asp-222 participates in S-adenosyl-L-methionine binding. His-260 (proton acceptor) is an active-site residue.

This sequence belongs to the class I-like SAM-binding methyltransferase superfamily. Cation-independent O-methyltransferase family. In terms of assembly, homodimer.

The enzyme catalyses quercetin + S-adenosyl-L-methionine = rhamnetin + S-adenosyl-L-homocysteine + H(+). It catalyses the reaction kaempferol + S-adenosyl-L-methionine = kaempferide + S-adenosyl-L-homocysteine + H(+). It carries out the reaction myricetin + S-adenosyl-L-methionine = 7-O-methylmyricetin + S-adenosyl-L-homocysteine + H(+). The catalysed reaction is kaempferide + S-adenosyl-L-methionine = 7,4'-O-dimethylkaempferol + S-adenosyl-L-homocysteine + H(+). The enzyme catalyses isorhamnetin + S-adenosyl-L-methionine = 3',4'-O-dimethylquercetin + S-adenosyl-L-homocysteine + 2 H(+). It catalyses the reaction 3',4',5,7-tetrahydroxy-3-methoxyflavone + S-adenosyl-L-methionine = 3',4',5-trihydroxy-3,7-dimethoxyflavone + S-adenosyl-L-homocysteine + H(+). It carries out the reaction rhamnetin + S-adenosyl-L-methionine = 7,4'-O-dimethylquercetin + S-adenosyl-L-homocysteine + H(+). The catalysed reaction is syringetin + S-adenosyl-L-methionine = 7,3',5'-O-trimethylmyricetin + S-adenosyl-L-homocysteine + H(+). The enzyme catalyses 3',4',5'-O-trimethylmyricetin + S-adenosyl-L-methionine = 7,3',4',5'-O-tetramethylmyricetin + S-adenosyl-L-homocysteine. It functions in the pathway flavonoid metabolism. Flavonoid 7/4'-O-methyltransferase involved in the biosynthesis of polymethoxylated flavonoids natural products such as myricetin derivatives, aroma compounds possessing antioxidant properties and exhibiting pharmacological activities such as anti-carcinogen, anti-viral, anti-thrombotic, anti-diabetic, anti-atherosclerotic, and anti-inflammatory effects. Catalyzes S-adenosylmethionine-dependent regioselective 7/4'-O-methylation of flavonoids; active on various hydroxylated flavonoid substrates. In Solanum lycopersicum (Tomato), this protein is Myricetin 7/4'-O-methyltransferase 2.